The primary structure comprises 83 residues: uncharacterized protein (83 aa).

Positions 57–83 (ESVEEEEEFEDYDEFEEEEEYYYDDEY) are disordered.

This is an uncharacterized protein from Archaeoglobus fulgidus (strain ATCC 49558 / DSM 4304 / JCM 9628 / NBRC 100126 / VC-16).